A 151-amino-acid polypeptide reads, in one-letter code: Transcriptional repressor NrdR (151 aa).

The segment at 3 to 34 (CPYCAYGESKVVDSRSTEDGSSIRRRRECLKC) is a zinc-finger region. In terms of domain architecture, ATP-cone spans 49–139 (ILVIKKNMSR…VYRQFKDINT (91 aa)).

This sequence belongs to the NrdR family. Requires Zn(2+) as cofactor.

Negatively regulates transcription of bacterial ribonucleotide reductase nrd genes and operons by binding to NrdR-boxes. This Clostridium botulinum (strain Loch Maree / Type A3) protein is Transcriptional repressor NrdR.